Reading from the N-terminus, the 303-residue chain is Coenzyme PQQ synthesis protein B (303 aa).

This sequence belongs to the PqqB family.

Its pathway is cofactor biosynthesis; pyrroloquinoline quinone biosynthesis. Functionally, may be involved in the transport of PQQ or its precursor to the periplasm. This is Coenzyme PQQ synthesis protein B from Rhizobium meliloti (strain 1021) (Ensifer meliloti).